The primary structure comprises 803 residues: Volume-regulated anion channel subunit LRRC8C (803 aa).

Topologically, residues 1 to 22 are cytoplasmic; that stretch reads MIPVTEFRQFSEQQPAFRVLKP. Residues 23 to 43 form a helical membrane-spanning segment; it reads WWDVFTDYLSVAMLMIGVFGC. Topologically, residues 44–125 are extracellular; that stretch reads TLQVMQDKII…YERALHWYAK (82 aa). 2 cysteine pairs are disulfide-bonded: cysteine 54–cysteine 308 and cysteine 115–cysteine 293. N-linked (GlcNAc...) asparagine glycans are attached at residues asparagine 64 and asparagine 70. A helical transmembrane segment spans residues 126–146; the sequence is YFPYLVLIHTLVFMLCSNFWF. The Cytoplasmic segment spans residues 147 to 266; sequence KFPGSSSKIE…ILYAMYVRQT (120 aa). A disordered region spans residues 177 to 211; sequence EVSGEDSEEKDNRKNNMNRSNTIQSGPEGSLVKSQ. Residues 191-211 are compositionally biased toward polar residues; sequence NNMNRSNTIQSGPEGSLVKSQ. Residues serine 212 and serine 215 each carry the phosphoserine modification. Residues 267 to 287 form a helical membrane-spanning segment; that stretch reads VLKVIKFLIIIAYNSALVSKV. The Extracellular portion of the chain corresponds to 288-320; sequence QFTVDCNVDIQDMTGYKNFSCNHTMAHLFSKLS. Residues 321–341 form a helical membrane-spanning segment; that stretch reads FCYLCFVSIYGLTCLYTLYWL. Over 342 to 803 the chain is Cytoplasmic; it reads FYRSLREYSF…SDVREQMKAD (462 aa). LRR repeat units follow at residues 397–420, 421–443, 446–466, 467–488, 490–513, 515–537, 541–563, 565–587, 588–611, 613–635, 637–659, 660–682, 684–705, 706–728, 730–751, 752–774, and 776–799; these read ENKL…KLQT, NAHN…VFEI, LQSL…IAQL, DNLQ…ALSF, KENL…MYGL, NLEE…TLES, LKSL…VVDV, SHLQ…NLKK, MTNL…VFSL, SLQE…SFQH, RKLT…IKKL, TSLE…LFLC, KIRY…IGVL, QSLQ…LYFC, KLKT…IGNL, LFLS…LGDC, and ALKR…VREQ.

It belongs to the LRRC8 family. As to quaternary structure, heterohexamer; oligomerizes with other LRRC8 proteins (LRRC8A, LRRC8B, LRRC8D and/or LRRC8E) to form a heterohexamer. Homoheptamer; inactive, likely because it is not targeted to the plasma membrane in the absence of LRRC8A. In vivo, the subunit composition may depend primarily on expression levels, and heterooligomeric channels containing various proportions of the different LRRC8 proteins may coexist.

It is found in the cell membrane. Its subcellular location is the endoplasmic reticulum membrane. It carries out the reaction chloride(in) = chloride(out). The enzyme catalyses iodide(out) = iodide(in). The catalysed reaction is taurine(out) = taurine(in). It catalyses the reaction 2',3'-cGAMP(out) = 2',3'-cGAMP(in). Non-essential component of the volume-regulated anion channel (VRAC, also named VSOAC channel), an anion channel required to maintain a constant cell volume in response to extracellular or intracellular osmotic changes. The VRAC channel conducts iodide better than chloride and can also conduct organic osmolytes like taurine. Plays a redundant role in the efflux of amino acids, such as aspartate and glutamate, in response to osmotic stress. The VRAC channel also mediates transport of immunoreactive cyclic dinucleotide GMP-AMP (2'-3'-cGAMP), an immune messenger produced in response to DNA virus in the cytosol. Channel activity requires LRRC8A plus at least one other family member (LRRC8B, LRRC8C, LRRC8D or LRRC8E); channel characteristics depend on the precise subunit composition. The protein is Volume-regulated anion channel subunit LRRC8C of Rattus norvegicus (Rat).